We begin with the raw amino-acid sequence, 38 residues long: ILSLSLLDRSTRCKGTGKSCSRIAYNCCTGSCRSGKCG.

The propeptide occupies 1–12 (ILSLSLLDRSTR). Cystine bridges form between Cys13/Cys28, Cys20/Cys32, and Cys27/Cys37. Cysteine amide is present on Cys37.

The protein belongs to the conotoxin O1 superfamily. Expressed by the venom duct.

The protein resides in the secreted. In terms of biological role, omega-conotoxins act at presynaptic membranes, they bind and block voltage-gated calcium channels (Cav). This peptide reversibly and selectively inhibits Cav2.2/CACNA1B (IC(50)=11.5 nM) voltage-gated calcium channels. Channel time recovery after toxin exposure is short (about 50 seconds). In vivo, it effectively and dose-dependently reduces nociceptive behavior in the formalin test and in neuropathic pain models, and reduces mechanical and thermal allodynia in the tail nerve injury rat model. It also shows significant analgesic effects on writhing in mouse neurotransmitter- and cytokine-induced pain models, though it has no effect on acute thermal pain and interferon-gamma-induced pain. It also depresses blood pressure immediately after administration, but pressure recovers relatively quickly and completely. The sequence is that of Conotoxin FVIA from Conus fulmen (Thunderbolt cone).